The following is a 261-amino-acid chain: Thiazole synthase (261 aa).

Residue lysine 95 is the Schiff-base intermediate with DXP of the active site. 1-deoxy-D-xylulose 5-phosphate-binding positions include glycine 156, 182 to 183, and 204 to 205; these read AG and NT.

It belongs to the ThiG family. In terms of assembly, homotetramer. Forms heterodimers with either ThiH or ThiS.

It is found in the cytoplasm. It catalyses the reaction [ThiS sulfur-carrier protein]-C-terminal-Gly-aminoethanethioate + 2-iminoacetate + 1-deoxy-D-xylulose 5-phosphate = [ThiS sulfur-carrier protein]-C-terminal Gly-Gly + 2-[(2R,5Z)-2-carboxy-4-methylthiazol-5(2H)-ylidene]ethyl phosphate + 2 H2O + H(+). It participates in cofactor biosynthesis; thiamine diphosphate biosynthesis. In terms of biological role, catalyzes the rearrangement of 1-deoxy-D-xylulose 5-phosphate (DXP) to produce the thiazole phosphate moiety of thiamine. Sulfur is provided by the thiocarboxylate moiety of the carrier protein ThiS. In vitro, sulfur can be provided by H(2)S. This chain is Thiazole synthase, found in Pectobacterium carotovorum subsp. carotovorum (strain PC1).